The chain runs to 612 residues: Protein cereblon (612 aa).

The span at 1 to 11 (MDDEETAEIED) shows a compositional bias: acidic residues. Disordered stretches follow at residues 1 to 30 (MDDEETAEIEDVNVLVPATGGEGPVDGASA), 58 to 133 (MELI…NPHP), and 181 to 211 (QERRRSRTSEEGEASSEPPHTPPPPRSPYDV). Over residues 69-81 (AADAPDAAASTGS) the composition is skewed to low complexity. Residues 181–190 (QERRRSRTSE) show a composition bias toward basic and acidic residues. The 229-residue stretch at 250 to 478 (HMLIFLHQHI…IIGSTLKDES (229 aa)) folds into the Lon N-terminal domain. The CULT domain maps to 477–586 (ESVFYCRYCN…LAGSSVRIGK (110 aa)). Zn(2+) is bound by residues Cys-482, Cys-485, Cys-551, and Cys-554.

The protein belongs to the CRBN family. As to quaternary structure, likely a component of a DCX (DDB1-CUL4-X-box) protein ligase complex. May interact with pic/DDB1. In terms of processing, ubiquitinated.

Its subcellular location is the nucleus. It functions in the pathway protein modification; protein ubiquitination. Substrate recognition component of a DCX (DDB1-CUL4-X-box) E3 protein ligase complex that mediates the ubiquitination and subsequent proteasomal degradation of target proteins. Has an essential role in mediating growth by negatively regulating insulin signaling. It also has a role in maintaining presynaptic function in the neuromuscular junction synapses of third-instar larvae. The sequence is that of Protein cereblon from Drosophila willistoni (Fruit fly).